Reading from the N-terminus, the 441-residue chain is Methionine aminopeptidase 2A (441 aa).

The tract at residues 1-103 (MAIGNPEVAT…SGDFPQGEIQ (103 aa)) is disordered. The segment covering 18–33 (AESSNGNESQLSSDLT) has biased composition (polar residues). Residues 37–62 (DLAEVKEDEKDNNQEEEDGLKAEAST) show a composition bias toward basic and acidic residues. Basic residues predominate over residues 63–76 (KKKKKKSKSKKKKS). His-194 is a substrate binding site. Residues Asp-214, Asp-225, and His-294 each contribute to the a divalent metal cation site. His-302 serves as a coordination point for substrate. A divalent metal cation is bound by residues Glu-327 and Glu-422.

This sequence belongs to the peptidase M24A family. Methionine aminopeptidase eukaryotic type 2 subfamily. The cofactor is Co(2+). Zn(2+) is required as a cofactor. Mn(2+) serves as cofactor. It depends on Fe(2+) as a cofactor. As to expression, ubiquitous. Preferentially expressed in roots.

Its subcellular location is the cytoplasm. It carries out the reaction Release of N-terminal amino acids, preferentially methionine, from peptides and arylamides.. Its function is as follows. Cotranslationally removes the N-terminal methionine from nascent proteins. The N-terminal methionine is often cleaved when the second residue in the primary sequence is small and uncharged (Met-Ala-, Cys, Gly, Pro, Ser, Thr, or Val). The polypeptide is Methionine aminopeptidase 2A (Arabidopsis thaliana (Mouse-ear cress)).